The chain runs to 216 residues: uncharacterized protein (216 aa).

A helical transmembrane segment spans residues 1-21 (MTIVHFVGSLFFFFFFSYIFF).

The protein resides in the membrane. This is an uncharacterized protein from Saccharomyces cerevisiae (strain ATCC 204508 / S288c) (Baker's yeast).